Consider the following 79-residue polypeptide: UPF0349 protein BCE_5075 (79 aa).

Belongs to the UPF0349 family.

The sequence is that of UPF0349 protein BCE_5075 from Bacillus cereus (strain ATCC 10987 / NRS 248).